A 298-amino-acid chain; its full sequence is Bifunctional protein FolD (298 aa).

NADP(+) is bound by residues 167 to 169 (GRS), Ser-192, and Ile-233.

This sequence belongs to the tetrahydrofolate dehydrogenase/cyclohydrolase family. In terms of assembly, homodimer.

The enzyme catalyses (6R)-5,10-methylene-5,6,7,8-tetrahydrofolate + NADP(+) = (6R)-5,10-methenyltetrahydrofolate + NADPH. It catalyses the reaction (6R)-5,10-methenyltetrahydrofolate + H2O = (6R)-10-formyltetrahydrofolate + H(+). Its pathway is one-carbon metabolism; tetrahydrofolate interconversion. Functionally, catalyzes the oxidation of 5,10-methylenetetrahydrofolate to 5,10-methenyltetrahydrofolate and then the hydrolysis of 5,10-methenyltetrahydrofolate to 10-formyltetrahydrofolate. This is Bifunctional protein FolD from Caulobacter sp. (strain K31).